The following is a 263-amino-acid chain: Glucosamine-6-phosphate deaminase 2 (263 aa).

Aspartate 82 serves as the catalytic Proton acceptor; for enolization step. The active-site For ring-opening step is the asparagine 151. Histidine 153 functions as the Proton acceptor; for ring-opening step in the catalytic mechanism. Glutamate 158 acts as the For ring-opening step in catalysis.

It belongs to the glucosamine/galactosamine-6-phosphate isomerase family. Homohexamer.

The catalysed reaction is alpha-D-glucosamine 6-phosphate + H2O = beta-D-fructose 6-phosphate + NH4(+). Catalyzes the reversible conversion of alpha-D-glucosamine 6-phosphate (GlcN-6P) into beta-D-fructose 6-phosphate (Fru-6P) and ammonium ion, a regulatory reaction step in de novo uridine diphosphate-N-acetyl-alpha-D-glucosamine (UDP-GlcNAc) biosynthesis via hexosamine pathway. This chain is Glucosamine-6-phosphate deaminase 2 (GPI2), found in Giardia intestinalis (Giardia lamblia).